We begin with the raw amino-acid sequence, 334 residues long: Ketol-acid reductoisomerase (NADP(+)) (334 aa).

Residues 1–181 (MTTVYYDQDV…GATRAGVIET (181 aa)) enclose the KARI N-terminal Rossmann domain. NADP(+) is bound by residues 25 to 28 (YGSQ), arginine 48, serine 52, and 82 to 85 (DEIQ). Histidine 107 is a catalytic residue. An NADP(+)-binding site is contributed by glycine 133. A KARI C-terminal knotted domain is found at 182–327 (TFKEETETDL…RELREMMPFI (146 aa)). The Mg(2+) site is built by aspartate 190, glutamate 194, glutamate 226, and glutamate 230. Serine 251 contacts substrate.

Belongs to the ketol-acid reductoisomerase family. The cofactor is Mg(2+).

The enzyme catalyses (2R)-2,3-dihydroxy-3-methylbutanoate + NADP(+) = (2S)-2-acetolactate + NADPH + H(+). It catalyses the reaction (2R,3R)-2,3-dihydroxy-3-methylpentanoate + NADP(+) = (S)-2-ethyl-2-hydroxy-3-oxobutanoate + NADPH + H(+). It participates in amino-acid biosynthesis; L-isoleucine biosynthesis; L-isoleucine from 2-oxobutanoate: step 2/4. It functions in the pathway amino-acid biosynthesis; L-valine biosynthesis; L-valine from pyruvate: step 2/4. Involved in the biosynthesis of branched-chain amino acids (BCAA). Catalyzes an alkyl-migration followed by a ketol-acid reduction of (S)-2-acetolactate (S2AL) to yield (R)-2,3-dihydroxy-isovalerate. In the isomerase reaction, S2AL is rearranged via a Mg-dependent methyl migration to produce 3-hydroxy-3-methyl-2-ketobutyrate (HMKB). In the reductase reaction, this 2-ketoacid undergoes a metal-dependent reduction by NADPH to yield (R)-2,3-dihydroxy-isovalerate. The polypeptide is Ketol-acid reductoisomerase (NADP(+)) (Staphylococcus aureus (strain USA300)).